The following is a 1017-amino-acid chain: Probable disease resistance protein RDL5 (1017 aa).

A coiled-coil region spans residues 25–52; it reads QGVEDQVTELKRDLNMLSSFLKDANAKK. One can recognise an NB-ARC domain in the interval 147-460; it reads KQREMRQKFS…AEGIFQPRHY (314 aa). 190–197 lines the ATP pocket; it reads GMGGLGKT. LRR repeat units follow at residues 602-627, 649-674, 675-699, 768-791, 792-819, 841-865, and 937-962; these read LIHL…NLKL, MQEL…NLVK, LETL…RLST, PSHL…ILEK, LLQL…GFPQ, MPLL…HLPS, and MPFL…QFIY.

The protein belongs to the disease resistance NB-LRR family.

Functionally, potential disease resistance protein. This chain is Probable disease resistance protein RDL5 (RDL5), found in Arabidopsis thaliana (Mouse-ear cress).